The sequence spans 185 residues: UPF0397 protein lhv_0999 (185 aa).

A run of 5 helical transmembrane segments spans residues 11–31, 45–65, 72–92, 111–131, and 145–165; these read VVAM…TSIP, FLAL…GFIG, IMYG…GLII, ILLF…VVAP, and VFVQ…VVGT.

The protein belongs to the UPF0397 family.

The protein resides in the cell membrane. This Lactobacillus helveticus (strain DPC 4571) protein is UPF0397 protein lhv_0999.